Reading from the N-terminus, the 158-residue chain is UPF0303 protein SCO2848 (158 aa).

It belongs to the UPF0303 family.

In Streptomyces coelicolor (strain ATCC BAA-471 / A3(2) / M145), this protein is UPF0303 protein SCO2848.